A 203-amino-acid polypeptide reads, in one-letter code: ESCRT-related protein CHMP1B (203 aa).

Coiled-coil stretches lie at residues 13-51 (DLKFTSKSLQRQSRKCEKEEKAEKLKVKKAIEKGNMDGA) and 109-140 (GNLQKMSETMDSFEKQFVNMEVQAEFMENAMA). The interval 172–203 (PQPAGHAIPTKTEEKVDEDDLSRRLAELKARG) is disordered. Positions 192–203 (LSRRLAELKARG) are enriched in basic and acidic residues.

The protein belongs to the SNF7 family. In terms of assembly, interacts with CHMP1A and LIP5. Interacts with VPS2.2.

The protein resides in the cytoplasm. It localises to the endosome membrane. In terms of biological role, involved in ESCRT-dependent multivesicular body (MVB) formation and sorting of endosomal cargo proteins into MVBs. Mediates the MVB sorting of the auxin carriers PIN1, PIN2 and AUX1. Required for embryonic axis establishment and seedling growth. Required for autophagic degradation of plastid proteins. Promotes the efficient sequestration of cargo from plastids into autophagosomes. Mediates the efficient delivery of autophagic plastid bodies to the vacuole, but not into the cytoplasm. In Arabidopsis thaliana (Mouse-ear cress), this protein is ESCRT-related protein CHMP1B.